The primary structure comprises 301 residues: Mitochondrial carnitine/acylcarnitine carrier protein (301 aa).

The residue at position 2 (Ala2) is an N-acetylalanine. At 2–12 (AEEPKPISPLK) the chain is on the cytoplasmic side. Solcar repeat units lie at residues 8–99 (ISPL…GKRL), 108–196 (LTYP…LKNL), and 207–293 (LSVP…PMKI). Residues 13 to 31 (NLLAGGFGGVCLVFVGHPL) traverse the membrane as a helical segment. Over 32-73 (DTVKVRLQTQPPSLPGQPPMYSGTIDCFRKTLFREGITGLYR) the chain is Mitochondrial matrix. A helical transmembrane segment spans residues 74–93 (GMAAPIIGVTPMFAVCFFGF). The Cytoplasmic segment spans residues 94-112 (GLGKRLQQKSPEDELTYPQ). The helical transmembrane segment at 113–131 (LFTAGMLSGVFTTGIMTPG) threads the bilayer. Residues 132 to 170 (ERIKCLLQIQASSGKNKYSGTLDCAKKLYQEFGIRGFYK) are Mitochondrial matrix-facing. An N6-acetyllysine mark is found at Lys148 and Lys157. Lys170 carries the N6-acetyllysine; alternate modification. Lys170 carries the N6-succinyllysine; alternate modification. Residues 171-190 (GTALTLMRDVPASGMYFMTY) traverse the membrane as a helical segment. Residues 191 to 211 (EWLKNLFTPQGKSVHDLSVPR) lie on the Cytoplasmic side of the membrane. Residues 212-230 (VLVAGGFRGIFNWVVAIPP) traverse the membrane as a helical segment. The Mitochondrial matrix portion of the chain corresponds to 231-267 (DVLKSRFQTAPPGKYPNGFRDVLRELIREEGVTSLYK). A helical membrane pass occupies residues 268–287 (GFNAVMIRAFPANAACFLGF). The Cytoplasmic portion of the chain corresponds to 288–301 (EIPMKILNWIAPNL).

This sequence belongs to the mitochondrial carrier (TC 2.A.29) family. The N-terminus is blocked.

It localises to the mitochondrion inner membrane. It catalyses the reaction O-acetyl-(R)-carnitine(in) + (R)-carnitine(out) = O-acetyl-(R)-carnitine(out) + (R)-carnitine(in). It carries out the reaction an O-acyl-(R)-carnitine(in) + (R)-carnitine(out) = an O-acyl-(R)-carnitine(out) + (R)-carnitine(in). The catalysed reaction is O-propanoyl-(R)-carnitine(in) + (R)-carnitine(out) = O-propanoyl-(R)-carnitine(out) + (R)-carnitine(in). The enzyme catalyses O-hexadecanoyl-(R)-carnitine(in) + (R)-carnitine(out) = O-hexadecanoyl-(R)-carnitine(out) + (R)-carnitine(in). It catalyses the reaction O-octanoyl-(R)-carnitine(in) + (R)-carnitine(out) = O-octanoyl-(R)-carnitine(out) + (R)-carnitine(in). It carries out the reaction (R)-carnitine(in) = (R)-carnitine(out). Mediates the electroneutral exchange of acylcarnitines (O-acyl-(R)-carnitine or L-acylcarnitine) of different acyl chain lengths (ranging from O-acetyl-(R)-carnitine to long-chain O-acyl-(R)-carnitines) with free carnitine ((R)-carnitine or L-carnitine) across the mitochondrial inner membrane, via a ping-pong mechanism. Key player in the mitochondrial oxidation pathway, it translocates the fatty acids in the form of acylcarnitines into the mitochondrial matrix, where the carnitine palmitoyltransferase 2 (CPT-2) activates them to undergo fatty acid beta-oxidation. Catalyzes the unidirectional transport (uniport) of carnitine at lower rates than the antiport (exchange). The chain is Mitochondrial carnitine/acylcarnitine carrier protein from Rattus norvegicus (Rat).